The sequence spans 188 residues: Protein SYC1 (188 aa).

As to quaternary structure, component of the cleavage and polyadenylation factor (CPF) complex, which is composed of at least PTI1, SYC1, SSU72, GLC7, MPE1, REF2, PFS2, PTA1, YSH1/BRR5, SWD2, CFT2/YDH1, YTH1, CFT1/YHH1, FIP1 and PAP1. Component of the APT complex, which is a subcomplex of CPF, and is composed of PTI1, SYC1, SSU72, GLC7, REF2, PTA1 and SWD2.

It localises to the nucleus. In terms of biological role, component of the cleavage and polyadenylation factor (CPF) complex, which plays a key role in polyadenylation-dependent pre-mRNA 3'-end formation and cooperates with cleavage factors including the CFIA complex and NAB4/CFIB. Component of the APT complex, which may be involved in polyadenylation-independent transcript 3'-end formation, including snoRNAs and snRNAs. The chain is Protein SYC1 (SYC1) from Saccharomyces cerevisiae (strain ATCC 204508 / S288c) (Baker's yeast).